Here is a 252-residue protein sequence, read N- to C-terminus: Cell division protein ZapD (252 aa).

It belongs to the ZapD family. As to quaternary structure, interacts with FtsZ.

Its subcellular location is the cytoplasm. Its function is as follows. Cell division factor that enhances FtsZ-ring assembly. Directly interacts with FtsZ and promotes bundling of FtsZ protofilaments, with a reduction in FtsZ GTPase activity. This Cupriavidus taiwanensis (strain DSM 17343 / BCRC 17206 / CCUG 44338 / CIP 107171 / LMG 19424 / R1) (Ralstonia taiwanensis (strain LMG 19424)) protein is Cell division protein ZapD.